The primary structure comprises 383 residues: Putative [LysW]-aminoadipate semialdehyde/glutamate semialdehyde transaminase (383 aa).

Pyridoxal 5'-phosphate contacts are provided by residues 97–98 (GT) and Phe124. Position 127 (Arg127) interacts with substrate. 209–212 (DEVQ) lines the pyridoxal 5'-phosphate pocket. Lys238 bears the N6-(pyridoxal phosphate)lysine mark. Residue Ser266 participates in substrate binding. Thr267 provides a ligand contact to pyridoxal 5'-phosphate.

The protein belongs to the class-III pyridoxal-phosphate-dependent aminotransferase family. LysJ subfamily. Homodimer. The cofactor is pyridoxal 5'-phosphate.

Its subcellular location is the cytoplasm. The enzyme catalyses [amino-group carrier protein]-C-terminal-gamma-(L-lysyl)-L-glutamate + 2-oxoglutarate = [amino-group carrier protein]-C-terminal-N-(1-carboxy-5-oxopentan-1-yl)-L-glutamine + L-glutamate. It catalyses the reaction [amino-group carrier protein]-C-terminal-gamma-(L-ornithyl)-L-glutamate + 2-oxoglutarate = [amino-group carrier protein]-C-terminal-gamma-(L-glutamyl-5-semialdehyde)-L-glutamate + L-glutamate. Its pathway is amino-acid biosynthesis; L-lysine biosynthesis via AAA pathway; L-lysine from L-alpha-aminoadipate (Thermus route): step 4/5. It functions in the pathway amino-acid biosynthesis; L-arginine biosynthesis. Involved in both the arginine and lysine biosynthetic pathways. The chain is Putative [LysW]-aminoadipate semialdehyde/glutamate semialdehyde transaminase from Pyrobaculum aerophilum (strain ATCC 51768 / DSM 7523 / JCM 9630 / CIP 104966 / NBRC 100827 / IM2).